The chain runs to 467 residues: MKSTVEHLSPTRVRINVEVPFDELKPNFDRAYKALAQQVRIPGFRPGKVPARVLESRIGRGPVLDEVVNESVPAKYLEAVNSSEVRTLGRPDIEVTKIEDGDVIEFKAEVDVRPEITVPAFGELKVSVDDVEVTEEEVNEQLDELRARFGTLAGVERPAQQGDFVSIDLSATVDGQEVEEAQTSGLSYEIGSGQLIDGIDEALIGASEGETRTFTTNLVAGEHAGKDAEVTVKLNSVKERHLPEVDDEFAQMASEFDSVDELLSDLRERLGRVKRMQQGMQARDKVLEALLETVEVPLPEKVVESEIDVRKHDAIHPFDHDEDRFGEWLEQQGQTREQFEDETREEAEKAVRTQLVLDTIADAEDVSVSDNELTERIIYQAQRFGVSPDQYVQQAQQSGQLGAIYADVRRSKALFSVVRQATVTDEEGNELDLDELFGTQAGEEQGEQAEGTEATDEQSAKADAKAE.

A PPIase FKBP-type domain is found at 162-243 (GDFVSIDLSA…LNSVKERHLP (82 aa)). Residues 426-435 (EEGNELDLDE) are compositionally biased toward acidic residues. The disordered stretch occupies residues 426–467 (EEGNELDLDELFGTQAGEEQGEQAEGTEATDEQSAKADAKAE). The span at 436 to 452 (LFGTQAGEEQGEQAEGT) shows a compositional bias: low complexity. The segment covering 458–467 (QSAKADAKAE) has biased composition (basic and acidic residues).

Belongs to the FKBP-type PPIase family. Tig subfamily.

It localises to the cytoplasm. The catalysed reaction is [protein]-peptidylproline (omega=180) = [protein]-peptidylproline (omega=0). Its function is as follows. Involved in protein export. Acts as a chaperone by maintaining the newly synthesized protein in an open conformation. Functions as a peptidyl-prolyl cis-trans isomerase. In Saccharopolyspora erythraea (strain ATCC 11635 / DSM 40517 / JCM 4748 / NBRC 13426 / NCIMB 8594 / NRRL 2338), this protein is Trigger factor.